The chain runs to 512 residues: Cytochrome P450 76C1 (512 aa).

The chain crosses the membrane as a helical span at residues 3–23 (IISGQALLLLFCFILSCFLIF). Residue Cys-450 coordinates heme.

This sequence belongs to the cytochrome P450 family. The cofactor is heme.

The protein localises to the membrane. In Arabidopsis thaliana (Mouse-ear cress), this protein is Cytochrome P450 76C1 (CYP76C1).